The sequence spans 482 residues: tRNA sulfurtransferase (482 aa).

The THUMP domain maps to 61 to 165 (LAIRDALTRI…DDRLLLIKGR (105 aa)). Residues 183 to 184 (LI), Lys-265, Gly-287, and Gln-296 contribute to the ATP site. A disulfide bond links Cys-344 and Cys-456. Residues 404 to 482 (FGPNDVILDI…GFENVKVYRP (79 aa)) form the Rhodanese domain. Cys-456 functions as the Cysteine persulfide intermediate in the catalytic mechanism.

It belongs to the ThiI family.

It localises to the cytoplasm. It carries out the reaction [ThiI sulfur-carrier protein]-S-sulfanyl-L-cysteine + a uridine in tRNA + 2 reduced [2Fe-2S]-[ferredoxin] + ATP + H(+) = [ThiI sulfur-carrier protein]-L-cysteine + a 4-thiouridine in tRNA + 2 oxidized [2Fe-2S]-[ferredoxin] + AMP + diphosphate. The enzyme catalyses [ThiS sulfur-carrier protein]-C-terminal Gly-Gly-AMP + S-sulfanyl-L-cysteinyl-[cysteine desulfurase] + AH2 = [ThiS sulfur-carrier protein]-C-terminal-Gly-aminoethanethioate + L-cysteinyl-[cysteine desulfurase] + A + AMP + 2 H(+). The protein operates within cofactor biosynthesis; thiamine diphosphate biosynthesis. Its function is as follows. Catalyzes the ATP-dependent transfer of a sulfur to tRNA to produce 4-thiouridine in position 8 of tRNAs, which functions as a near-UV photosensor. Also catalyzes the transfer of sulfur to the sulfur carrier protein ThiS, forming ThiS-thiocarboxylate. This is a step in the synthesis of thiazole, in the thiamine biosynthesis pathway. The sulfur is donated as persulfide by IscS. The protein is tRNA sulfurtransferase of Salmonella enteritidis PT4 (strain P125109).